The chain runs to 135 residues: Flagellar assembly factor FliW 2 (135 aa).

The protein belongs to the FliW family. In terms of assembly, interacts with translational regulator CsrA and flagellin(s).

It localises to the cytoplasm. In terms of biological role, acts as an anti-CsrA protein, binds CsrA and prevents it from repressing translation of its target genes, one of which is flagellin. Binds to flagellin and participates in the assembly of the flagellum. The chain is Flagellar assembly factor FliW 2 from Helicobacter acinonychis (strain Sheeba).